We begin with the raw amino-acid sequence, 534 residues long: Probable DNA polymerase epsilon subunit 2 (534 aa).

The protein belongs to the DNA polymerase epsilon subunit B family. As to quaternary structure, consists of four subunits.

Its subcellular location is the nucleus. Its function is as follows. Accessory component of the DNA polymerase epsilon complex. Participates in DNA repair and in chromosomal DNA replication. The sequence is that of Probable DNA polymerase epsilon subunit 2 (pole-2) from Caenorhabditis elegans.